The following is a 421-amino-acid chain: Exopolysaccharide production protein ExoF (421 aa).

Positions Met-1–Ser-31 are cleaved as a signal peptide.

It is found in the periplasm. Its pathway is glycan metabolism; exopolysaccharide biosynthesis. Involved in succinoglycan (EPS I) synthesis. Needed for the addition of the first sugar (galactose) to the isoprenoid carrier. The polypeptide is Exopolysaccharide production protein ExoF (exoF) (Rhizobium meliloti (strain 1021) (Ensifer meliloti)).